Here is a 325-residue protein sequence, read N- to C-terminus: Beta-1,3-galactosyltransferase 6 (325 aa).

Over 1–11 (MKVFRRAWRHR) the chain is Cytoplasmic. The helical; Signal-anchor for type II membrane protein transmembrane segment at 12–30 (VALGLGGLAFCGTTLLYLA) threads the bilayer. Topologically, residues 31–325 (RCASEGETPS…QCCQRKEGVP (295 aa)) are lumenal. Asparagine 127 carries an N-linked (GlcNAc...) asparagine glycan.

This sequence belongs to the glycosyltransferase 31 family. Mn(2+) is required as a cofactor.

Its subcellular location is the golgi apparatus. The protein resides in the golgi stack membrane. The enzyme catalyses 3-O-(beta-D-galactosyl-(1-&gt;4)-beta-D-xylosyl)-L-seryl-[protein] + UDP-alpha-D-galactose = 3-O-(beta-D-galactosyl-(1-&gt;3)-beta-D-galactosyl-(1-&gt;4)-beta-D-xylosyl)-L-seryl-[protein] + UDP + H(+). It participates in glycan metabolism; chondroitin sulfate biosynthesis. It functions in the pathway glycan metabolism; heparan sulfate biosynthesis. In terms of biological role, beta-1,3-galactosyltransferase that transfers galactose from UDP-galactose to substrates with a terminal beta-linked galactose residue. Has a preference for galactose-beta-1,4-xylose that is found in the linker region of glycosaminoglycans, such as heparan sulfate and chondroitin sulfate. Has no activity towards substrates with terminal glucosamine or galactosamine residues. This is Beta-1,3-galactosyltransferase 6 (B3galt6) from Mus musculus (Mouse).